The chain runs to 62 residues: UPF0434 protein FTM_0733 (62 aa).

This sequence belongs to the UPF0434 family.

The protein is UPF0434 protein FTM_0733 of Francisella tularensis subsp. mediasiatica (strain FSC147).